The primary structure comprises 229 residues: Urease accessory protein UreF (229 aa).

This sequence belongs to the UreF family. As to quaternary structure, ureD, UreF and UreG form a complex that acts as a GTP-hydrolysis-dependent molecular chaperone, activating the urease apoprotein by helping to assemble the nickel containing metallocenter of UreC. The UreE protein probably delivers the nickel.

The protein localises to the cytoplasm. Required for maturation of urease via the functional incorporation of the urease nickel metallocenter. The protein is Urease accessory protein UreF of Staphylococcus aureus (strain JH1).